Here is a 288-residue protein sequence, read N- to C-terminus: Transmembrane and coiled-coil domain-containing protein 5A (288 aa).

Residues 10–192 (KRNIISLNMD…ALFLEREVSK (183 aa)) adopt a coiled-coil conformation. The helical transmembrane segment at 224 to 244 (IFCCLFFITLFFIRLLSYMFF) threads the bilayer.

The protein belongs to the TMCO5 family.

Its subcellular location is the endoplasmic reticulum membrane. The protein resides in the nucleus membrane. This is Transmembrane and coiled-coil domain-containing protein 5A (TMCO5A) from Homo sapiens (Human).